Here is a 702-residue protein sequence, read N- to C-terminus: Phosphatase and actin regulator 4 (702 aa).

3 disordered regions span residues 1-38, 82-194, and 222-363; these read MEDP…SKFS, GVLL…SSGG, and NLSV…PFPA. An RPEL 1 repeat occupies 63-88; the sequence is EVLERKISMRKPREELVKRGVLLEDP. Polar residues predominate over residues 106-120; it reads GHTTPIGNARSSSPV. Phosphoserine is present on residues serine 116, serine 118, serine 131, and serine 147. A compositionally biased stretch (polar residues) spans 147 to 156; sequence STGSQPNSEA. Positions 163–173 are enriched in pro residues; the sequence is VPKPPLLPPKR. Low complexity predominate over residues 233–250; that stretch reads TLPAAPASTNTTATPSLT. A phosphoserine mark is found at serine 270 and serine 291. Residues 301–318 show a composition bias toward polar residues; the sequence is PSTSVPTLESAAAITTKT. A phosphoserine mark is found at serine 342 and serine 344. The segment covering 342–362 has biased composition (pro residues); sequence SPSPPLPTHIPPEPPRTPPFP. Threonine 358 is modified (phosphothreonine). Serine 427 carries the post-translational modification Phosphoserine. Residue threonine 432 is modified to Phosphothreonine. Residues serine 443, serine 453, and serine 464 each carry the phosphoserine modification. The tract at residues 473 to 536 is disordered; sequence KVPDDEEEEE…EEDEDESYQS (64 aa). Residues 486–497 show a composition bias toward low complexity; it reads PSTFSEETTPTS. Residues 508 to 518 show a composition bias toward acidic residues; that stretch reads EEEEKESDSDS. Serine 514, serine 516, serine 557, and serine 590 each carry phosphoserine. RPEL repeat units lie at residues 583-608 and 621-646; these read NTLI…QPKN and RRLT…RFNE. A disordered region spans residues 592 to 615; sequence RPTPEELEQRNILQPKNEADRQAE. A Phosphoserine modification is found at serine 628.

The protein belongs to the phosphatase and actin regulator family. As to quaternary structure, binds PPP1CA and actin.

It localises to the cytoplasm. The protein localises to the cell projection. The protein resides in the lamellipodium. Functionally, regulator of protein phosphatase 1 (PP1) required for neural tube and optic fissure closure, and enteric neural crest cell (ENCCs) migration during development. Acts as an activator of PP1 by interacting with PPP1CA and preventing phosphorylation of PPP1CA at 'Thr-320'. During neural tube closure, localizes to the ventral neural tube and activates PP1, leading to down-regulate cell proliferation within cranial neural tissue and the neural retina. Also acts as a regulator of migration of enteric neural crest cells (ENCCs) by activating PP1, leading to dephosphorylation and subsequent activation of cofilin (COF1 or COF2) and repression of the integrin signaling through the RHO/ROCK pathway. This is Phosphatase and actin regulator 4 (PHACTR4) from Pongo abelii (Sumatran orangutan).